We begin with the raw amino-acid sequence, 29 residues long: Cytochrome b6-f complex subunit 8 (29 aa).

A helical membrane pass occupies residues 3-23 (ILALGWVSVLALFTWSIAMVV).

It belongs to the PetN family. In terms of assembly, the 4 large subunits of the cytochrome b6-f complex are cytochrome b6, subunit IV (17 kDa polypeptide, PetD), cytochrome f and the Rieske protein, while the 4 small subunits are PetG, PetL, PetM and PetN. The complex functions as a dimer.

The protein localises to the cellular thylakoid membrane. In terms of biological role, component of the cytochrome b6-f complex, which mediates electron transfer between photosystem II (PSII) and photosystem I (PSI), cyclic electron flow around PSI, and state transitions. The sequence is that of Cytochrome b6-f complex subunit 8 from Gloeothece citriformis (strain PCC 7424) (Cyanothece sp. (strain PCC 7424)).